The primary structure comprises 496 residues: Adenosine transporter 1 (496 aa).

At Met1–Glu26 the chain is on the cytoplasmic side. The chain crosses the membrane as a helical span at residues Phe27–Val47. Residues Phe48–Asn77 lie on the Extracellular side of the membrane. A helical membrane pass occupies residues Val78–Leu98. Over Leu99–Met107 the chain is Cytoplasmic. Residues Leu108–Val128 form a helical membrane-spanning segment. At Pro129 to Glu135 the chain is on the extracellular side. Residues Gly136–Phe156 traverse the membrane as a helical segment. The Cytoplasmic segment spans residues Glu157–Thr172. Residues Ser173–Val193 traverse the membrane as a helical segment. Topologically, residues Lys194–Ser208 are extracellular. A helical membrane pass occupies residues Tyr209–Met229. Topologically, residues Arg230–Lys336 are cytoplasmic. The chain crosses the membrane as a helical span at residues Trp337–Ala357. Over Thr358–Lys365 the chain is Extracellular. Residues Trp366 to Pro386 traverse the membrane as a helical segment. Residues Ala387–Arg399 are Cytoplasmic-facing. Residues Trp400 to Ser420 traverse the membrane as a helical segment. The Extracellular segment spans residues Tyr421–Tyr431. The helical transmembrane segment at Val432–Gly452 threads the bilayer. The Cytoplasmic segment spans residues Pro453–Arg464. A helical membrane pass occupies residues Phe465–Leu485. Residues Ser486–Tyr496 are Extracellular-facing.

Belongs to the SLC29A/ENT transporter (TC 2.A.57) family.

The protein localises to the membrane. It catalyses the reaction adenosine(in) = adenosine(out). Its function is as follows. Adenosine transporter. The protein is Adenosine transporter 1 of Crithidia fasciculata.